The sequence spans 373 residues: Methionine import ATP-binding protein MetN 1 (373 aa).

Residues 29-270 (ILIDRVRKVY…PRHEVTRRFV (242 aa)) form the ABC transporter domain. 67–74 (GRSGAGKS) is a binding site for ATP.

Belongs to the ABC transporter superfamily. Methionine importer (TC 3.A.1.24) family. The complex is composed of two ATP-binding proteins (MetN), two transmembrane proteins (MetI) and a solute-binding protein (MetQ).

It localises to the cell inner membrane. It carries out the reaction L-methionine(out) + ATP + H2O = L-methionine(in) + ADP + phosphate + H(+). The catalysed reaction is D-methionine(out) + ATP + H2O = D-methionine(in) + ADP + phosphate + H(+). Part of the ABC transporter complex MetNIQ involved in methionine import. Responsible for energy coupling to the transport system. This Rhodopseudomonas palustris (strain ATCC BAA-98 / CGA009) protein is Methionine import ATP-binding protein MetN 1.